The chain runs to 205 residues: Ephrin-A1 (205 aa).

A signal peptide spans methionine 1 to alanine 17. An Ephrin RBD domain is found at alanine 18–isoleucine 151. The N-linked (GlcNAc...) asparagine glycan is linked to asparagine 26. 2 disulfide bridges follow: cysteine 51-cysteine 92 and cysteine 80-cysteine 140. Residue serine 182 is the site of GPI-anchor amidated serine attachment. Residues alanine 183 to glutamine 205 constitute a propeptide, removed in mature form.

The protein belongs to the ephrin family. Monomer. Homodimer. Forms heterodimers with EPHA2. Binds to the receptor tyrosine kinases EPHA2, EPHA3, EPHA4, EPHA5, EPHA6 and EPHA7. Also binds with low affinity to EPHA1. In terms of processing, undergoes proteolysis by a metalloprotease to give rise to a soluble monomeric form. N-Glycosylation is required for binding to EPHA2 receptor and inducing its internalization.

The protein localises to the cell membrane. It is found in the secreted. Its function is as follows. Cell surface GPI-bound ligand for Eph receptors, a family of receptor tyrosine kinases which are crucial for migration, repulsion and adhesion during neuronal, vascular and epithelial development. Binds promiscuously Eph receptors residing on adjacent cells, leading to contact-dependent bidirectional signaling into neighboring cells. Plays an important role in angiogenesis and tumor neovascularization. The recruitment of VAV2, VAV3 and PI3-kinase p85 subunit by phosphorylated EPHA2 is critical for EFNA1-induced RAC1 GTPase activation and vascular endothelial cell migration and assembly. Exerts anti-oncogenic effects in tumor cells through activation and down-regulation of EPHA2. Activates EPHA2 by inducing tyrosine phosphorylation which leads to its internalization and degradation. Acts as a negative regulator in the tumorigenesis of gliomas by down-regulating EPHA2 and FAK. Can evoke collapse of embryonic neuronal growth cone and regulates dendritic spine morphogenesis. The chain is Ephrin-A1 (Efna1) from Rattus norvegicus (Rat).